The following is a 219-amino-acid chain: MTAEADGEDPAERKMRFLFAVRSRGVTDARVLAAMERIDRGAFVRGIFADRAYEDMPLPIACGQTISQPSVVGLMSQALAVNPRDKVLEVGTGSGYQAAVLSQLARRVYTVDRHRRLVREATEVFHRLSLTNITALIADGSFGLPEQAPFDRILVTAAAEDPPGPLLAQLKIGGIMVVPVGQTDAVQNLIKVTRLEQGYDYEELRPVRFVPLVEGIGSD.

Ser-67 is a catalytic residue.

The protein belongs to the methyltransferase superfamily. L-isoaspartyl/D-aspartyl protein methyltransferase family.

The protein localises to the cytoplasm. The enzyme catalyses [protein]-L-isoaspartate + S-adenosyl-L-methionine = [protein]-L-isoaspartate alpha-methyl ester + S-adenosyl-L-homocysteine. In terms of biological role, catalyzes the methyl esterification of L-isoaspartyl residues in peptides and proteins that result from spontaneous decomposition of normal L-aspartyl and L-asparaginyl residues. It plays a role in the repair and/or degradation of damaged proteins. The sequence is that of Protein-L-isoaspartate O-methyltransferase from Cereibacter sphaeroides (strain ATCC 17029 / ATH 2.4.9) (Rhodobacter sphaeroides).